The sequence spans 279 residues: Small ribosomal subunit protein uS2 (279 aa).

The tract at residues 232-279 (RRRGTDEKPEAGVASDEPLAEWERELLEEPKKSDEPKSDEQPAAAAAE) is disordered. Basic and acidic residues predominate over residues 252–271 (EWERELLEEPKKSDEPKSDE).

The protein belongs to the universal ribosomal protein uS2 family.

This is Small ribosomal subunit protein uS2 from Salinispora arenicola (strain CNS-205).